Here is a 151-residue protein sequence, read N- to C-terminus: Viral interleukin-17 (151 aa).

Residues 1–22 form the signal peptide; the sequence is MTFRKTSLVLLLLLSIDCIVKS. 3 N-linked (GlcNAc...) asparagine; by host glycosylation sites follow: Asn36, Asn53, and Asn64. Intrachain disulfides connect Cys90–Cys140 and Cys95–Cys142.

It belongs to the IL-17 family.

The protein resides in the secreted. The protein is Viral interleukin-17 (13) of Saimiri sciureus (Common squirrel monkey).